The sequence spans 331 residues: MAQSPPPAVVTVTGAAGSIGYASLFRIAAGEMLGPDTPIRLRLLEIPSAVSAAEGTAMELDDSAFPLLRDIEVHDDPKRGFDGTDVALLIGSRPRSKGMERGDLLAANGQIFTVQGRALNQVAADGVRVLVVGNPANTNALVAANNAPDIPAERFTALTRLDHNRAIAQLARHSGAAVKDIRRVAIWGNHSSTQYPDIFHARVGDRSGAEFAADREWLTGDFIPTVANRGSAIIEARGASSAASAANAAIDHVHDWVLGTPDDDWTSVALPSTGAYGVPEGLVSSFPVRSVDGSWQIVDGLEIDDFSRKLIDASVGELESERDAVRGMGFI.

14–20 is a binding site for NAD(+); that stretch reads GAAGSIG. Arg95 and Arg101 together coordinate substrate. Residues Asn108, Gln115, and 132 to 134 each bind NAD(+); that span reads VGN. 2 residues coordinate substrate: Asn134 and Arg165. His190 acts as the Proton acceptor in catalysis.

The protein belongs to the LDH/MDH superfamily. MDH type 2 family.

It carries out the reaction (S)-malate + NAD(+) = oxaloacetate + NADH + H(+). In terms of biological role, catalyzes the reversible oxidation of malate to oxaloacetate. This is Malate dehydrogenase from Rhodococcus jostii (strain RHA1).